The sequence spans 56 residues: Large ribosomal subunit protein bL32 (56 aa).

Positions 1 to 26 are disordered; sequence MAVQKSKVTRSRRGQRRSHDALTAAA. A compositionally biased stretch (basic residues) spans 7–16; the sequence is KVTRSRRGQR.

The protein belongs to the bacterial ribosomal protein bL32 family.

The protein is Large ribosomal subunit protein bL32 (rpmF) of Moritella marina (Vibrio marinus).